The chain runs to 475 residues: MPGVSARRLSHEERRQLAVNLTRVVTLYRSILDAYIIEFFTDNLWGTLPCSWQEALDGLNPPQLATLLLGMPREGEVARYRSVWPLTLLALKSTAYALAFTRTPGFQTPSEFLENPSQSSRLTAPFRKHVRPKKQHEIRRLGELVKKLSDLTGCTQVVDVGSGQGHLSRFMSLGLGLMVKSIEGDQRLVERAQRLDQELLQTLEKEEKRNPKVVQTGPRHPPHHVVRWVDPTTLCEELLLPLETSPQSRARLLLTGLHACGDLSVALLKHFCCCPEVVALASVGCCYMKLSDPGGYPLSQWVAGLPGYELPYRLREGACHALEEYAERLQKAGPSLRTHCYRAALETVIRCAQPELRRPGVQGIPRVHELKIEEYVQRGLQRVGLDPHLPLNVAALRAHQAQENRVVAFFSLALLLAPLVETLILLDRLLYLQEQGFHAELLPIFSPELSPRNLVLVATKGPLGEAFSLLETEDN.

Residues 186–210 (QRLVERAQRLDQELLQTLEKEEKRN) adopt a coiled-coil conformation. A helical transmembrane segment spans residues 406-426 (VVAFFSLALLLAPLVETLILL).

This sequence belongs to the METTL25 family.

The protein resides in the membrane. The sequence is that of Methyltransferase-like protein 25B from Bos taurus (Bovine).